The sequence spans 121 residues: Spermidine export protein MdtJ (121 aa).

Helical transmembrane passes span M1–S21, G32–V52, I55–F75, and E82–I102.

Belongs to the drug/metabolite transporter (DMT) superfamily. Small multidrug resistance (SMR) (TC 2.A.7.1) family. MdtJ subfamily. In terms of assembly, forms a complex with MdtI.

Its subcellular location is the cell inner membrane. Its function is as follows. Catalyzes the excretion of spermidine. The chain is Spermidine export protein MdtJ from Escherichia coli O127:H6 (strain E2348/69 / EPEC).